The following is a 220-amino-acid chain: Ribose-5-phosphate isomerase A (220 aa).

Substrate-binding positions include 25–28 (TGST), 80–83 (DGAD), and 93–96 (KGGG). The active-site Proton acceptor is glutamate 102. Position 120 (lysine 120) interacts with substrate.

It belongs to the ribose 5-phosphate isomerase family. In terms of assembly, homodimer.

The enzyme catalyses aldehydo-D-ribose 5-phosphate = D-ribulose 5-phosphate. The protein operates within carbohydrate degradation; pentose phosphate pathway; D-ribose 5-phosphate from D-ribulose 5-phosphate (non-oxidative stage): step 1/1. In terms of biological role, catalyzes the reversible conversion of ribose-5-phosphate to ribulose 5-phosphate. This is Ribose-5-phosphate isomerase A from Bacillus thuringiensis subsp. konkukian (strain 97-27).